Consider the following 438-residue polypeptide: 23S rRNA (uracil(1939)-C(5))-methyltransferase RlmD (438 aa).

One can recognise a TRAM domain in the interval 10 to 69 (KASVNTKHQSVDVVRLDHNGAGIAFVDKKPVFIEGALPGEKAIIQFIEQKKQFSRAKLIK). Residues Cys-82, Cys-88, Cys-91, and Cys-169 each contribute to the [4Fe-4S] cluster site. Gln-272, Phe-301, Asn-306, Glu-322, Asn-349, and Asp-370 together coordinate S-adenosyl-L-methionine. Catalysis depends on Cys-396, which acts as the Nucleophile.

The protein belongs to the class I-like SAM-binding methyltransferase superfamily. RNA M5U methyltransferase family. RlmD subfamily.

It carries out the reaction uridine(1939) in 23S rRNA + S-adenosyl-L-methionine = 5-methyluridine(1939) in 23S rRNA + S-adenosyl-L-homocysteine + H(+). Its function is as follows. Catalyzes the formation of 5-methyl-uridine at position 1939 (m5U1939) in 23S rRNA. This is 23S rRNA (uracil(1939)-C(5))-methyltransferase RlmD from Aliivibrio fischeri (strain ATCC 700601 / ES114) (Vibrio fischeri).